Here is a 246-residue protein sequence, read N- to C-terminus: Ribonuclease 3 (246 aa).

The RNase III domain occupies 8 to 137 (ANRLKTRLGF…LLGAIYLDQG (130 aa)). Glu50 serves as a coordination point for Mg(2+). Asp54 is an active-site residue. Mg(2+)-binding residues include Asp123 and Glu126. Glu126 is an active-site residue. One can recognise a DRBM domain in the interval 164–233 (DYKTELQEIL…AKDAFQHLEG (70 aa)). The tract at residues 212–246 (SGHSKKEAEQQAAKDAFQHLEGMGKSGHKSAGPIR) is disordered.

It belongs to the ribonuclease III family. Homodimer. Mg(2+) serves as cofactor.

The protein resides in the cytoplasm. The catalysed reaction is Endonucleolytic cleavage to 5'-phosphomonoester.. Its function is as follows. Digests double-stranded RNA. Involved in the processing of primary rRNA transcript to yield the immediate precursors to the large and small rRNAs (23S and 16S). Processes some mRNAs, and tRNAs when they are encoded in the rRNA operon. Processes pre-crRNA and tracrRNA of type II CRISPR loci if present in the organism. In Desulforamulus reducens (strain ATCC BAA-1160 / DSM 100696 / MI-1) (Desulfotomaculum reducens), this protein is Ribonuclease 3.